The sequence spans 73 residues: Venom protein 55.1 (73 aa).

A signal peptide spans 1–19 (MNFLCILFVVSLISSLSKC). Pro-57 carries the post-translational modification Proline amide. The propeptide occupies 61 to 73 (RRSFDLYALVNAK).

The protein belongs to the diuretic hormone class 2 family. Expressed by the venom gland.

It localises to the secreted. Regulates fluid secretion. The chain is Venom protein 55.1 from Lychas mucronatus (Chinese swimming scorpion).